A 141-amino-acid polypeptide reads, in one-letter code: Hemoglobin subunit alpha (141 aa).

Residues 1–141 (VLSPADKTNV…VSTVLTSKYR (141 aa)) enclose the Globin domain. Ser-3 is modified (phosphoserine). Lys-7 carries the N6-succinyllysine modification. Position 8 is a phosphothreonine (Thr-8). Lys-11 is subject to N6-succinyllysine. Lys-16 carries the N6-acetyllysine; alternate modification. Residue Lys-16 is modified to N6-succinyllysine; alternate. Position 24 is a phosphotyrosine (Tyr-24). Ser-35 is modified (phosphoserine). The residue at position 40 (Lys-40) is an N6-succinyllysine. Ser-49 bears the Phosphoserine mark. His-58 contributes to the O2 binding site. Residue His-87 coordinates heme b. Ser-102 carries the phosphoserine modification. Thr-108 is modified (phosphothreonine). Residues Ser-124 and Ser-131 each carry the phosphoserine modification. Phosphothreonine is present on residues Thr-134 and Thr-137. Position 138 is a phosphoserine (Ser-138).

Belongs to the globin family. As to quaternary structure, heterotetramer of two alpha chains and two beta chains. In terms of tissue distribution, red blood cells.

In terms of biological role, involved in oxygen transport from the lung to the various peripheral tissues. Hemopressin acts as an antagonist peptide of the cannabinoid receptor CNR1. Hemopressin-binding efficiently blocks cannabinoid receptor CNR1 and subsequent signaling. In Loris tardigradus (Slender loris), this protein is Hemoglobin subunit alpha (HBA).